The following is a 141-amino-acid chain: Large ribosomal subunit protein uL16 (141 aa).

Belongs to the universal ribosomal protein uL16 family. Part of the 50S ribosomal subunit.

Binds 23S rRNA and is also seen to make contacts with the A and possibly P site tRNAs. The sequence is that of Large ribosomal subunit protein uL16 from Petrotoga mobilis (strain DSM 10674 / SJ95).